Here is a 374-residue protein sequence, read N- to C-terminus: Putative glutamate--cysteine ligase 2 (374 aa).

The protein belongs to the glutamate--cysteine ligase type 2 family. YbdK subfamily.

It carries out the reaction L-cysteine + L-glutamate + ATP = gamma-L-glutamyl-L-cysteine + ADP + phosphate + H(+). ATP-dependent carboxylate-amine ligase which exhibits weak glutamate--cysteine ligase activity. The protein is Putative glutamate--cysteine ligase 2 of Acidovorax ebreus (strain TPSY) (Diaphorobacter sp. (strain TPSY)).